A 338-amino-acid chain; its full sequence is Fructose-1,6-bisphosphatase class 1 1 (338 aa).

Residues glutamate 91, aspartate 113, leucine 115, and aspartate 116 each coordinate Mg(2+). Substrate-binding positions include 116–119 (DGSS), asparagine 208, and lysine 274. Glutamate 280 lines the Mg(2+) pocket.

It belongs to the FBPase class 1 family. Homotetramer. It depends on Mg(2+) as a cofactor.

It localises to the cytoplasm. It catalyses the reaction beta-D-fructose 1,6-bisphosphate + H2O = beta-D-fructose 6-phosphate + phosphate. Its pathway is carbohydrate biosynthesis; gluconeogenesis. The protein is Fructose-1,6-bisphosphatase class 1 1 of Cupriavidus taiwanensis (strain DSM 17343 / BCRC 17206 / CCUG 44338 / CIP 107171 / LMG 19424 / R1) (Ralstonia taiwanensis (strain LMG 19424)).